Reading from the N-terminus, the 451-residue chain is Phosphoglucosamine mutase (451 aa).

Catalysis depends on S102, which acts as the Phosphoserine intermediate. Mg(2+) is bound by residues S102, D243, D245, and D247. S102 bears the Phosphoserine mark.

The protein belongs to the phosphohexose mutase family. The cofactor is Mg(2+). Activated by phosphorylation.

The catalysed reaction is alpha-D-glucosamine 1-phosphate = D-glucosamine 6-phosphate. Functionally, catalyzes the conversion of glucosamine-6-phosphate to glucosamine-1-phosphate. This chain is Phosphoglucosamine mutase, found in Salinispora tropica (strain ATCC BAA-916 / DSM 44818 / JCM 13857 / NBRC 105044 / CNB-440).